The chain runs to 320 residues: Lipoyl synthase (320 aa).

7 residues coordinate [4Fe-4S] cluster: Cys67, Cys72, Cys78, Cys93, Cys97, Cys100, and Ser307. The Radical SAM core domain occupies 79-296 (FNHGTATFMI…REKAAEMGFE (218 aa)).

Belongs to the radical SAM superfamily. Lipoyl synthase family. It depends on [4Fe-4S] cluster as a cofactor.

The protein localises to the cytoplasm. The enzyme catalyses [[Fe-S] cluster scaffold protein carrying a second [4Fe-4S](2+) cluster] + N(6)-octanoyl-L-lysyl-[protein] + 2 oxidized [2Fe-2S]-[ferredoxin] + 2 S-adenosyl-L-methionine + 4 H(+) = [[Fe-S] cluster scaffold protein] + N(6)-[(R)-dihydrolipoyl]-L-lysyl-[protein] + 4 Fe(3+) + 2 hydrogen sulfide + 2 5'-deoxyadenosine + 2 L-methionine + 2 reduced [2Fe-2S]-[ferredoxin]. It participates in protein modification; protein lipoylation via endogenous pathway; protein N(6)-(lipoyl)lysine from octanoyl-[acyl-carrier-protein]: step 2/2. Catalyzes the radical-mediated insertion of two sulfur atoms into the C-6 and C-8 positions of the octanoyl moiety bound to the lipoyl domains of lipoate-dependent enzymes, thereby converting the octanoylated domains into lipoylated derivatives. The polypeptide is Lipoyl synthase (Actinobacillus succinogenes (strain ATCC 55618 / DSM 22257 / CCUG 43843 / 130Z)).